We begin with the raw amino-acid sequence, 163 residues long: 2-amino-4-hydroxy-6-hydroxymethyldihydropteridine pyrophosphokinase (163 aa).

This sequence belongs to the HPPK family.

It catalyses the reaction 6-hydroxymethyl-7,8-dihydropterin + ATP = (7,8-dihydropterin-6-yl)methyl diphosphate + AMP + H(+). It functions in the pathway cofactor biosynthesis; tetrahydrofolate biosynthesis; 2-amino-4-hydroxy-6-hydroxymethyl-7,8-dihydropteridine diphosphate from 7,8-dihydroneopterin triphosphate: step 4/4. Its function is as follows. Catalyzes the transfer of pyrophosphate from adenosine triphosphate (ATP) to 6-hydroxymethyl-7,8-dihydropterin, an enzymatic step in folate biosynthesis pathway. The protein is 2-amino-4-hydroxy-6-hydroxymethyldihydropteridine pyrophosphokinase (folK) of Helicobacter pylori (strain ATCC 700392 / 26695) (Campylobacter pylori).